The following is a 359-amino-acid chain: Maleylacetate reductase 2 (359 aa).

Belongs to the iron-containing alcohol dehydrogenase family. In terms of assembly, homodimer.

The enzyme catalyses 3-oxoadipate + NAD(+) = maleylacetate + NADH + H(+). It carries out the reaction 3-oxoadipate + NADP(+) = maleylacetate + NADPH + H(+). It functions in the pathway aromatic compound metabolism; 3-chlorocatechol degradation. Its activity is regulated as follows. Inhibited by p-chloromercuribenzoate and by 3-oxoadipate, and, in a temperature-dependent manner, by manganese. Functionally, plays a major role in the degradation of chloroaromatic compounds by channeling maleylacetate and some of its substituted derivatives into the 3-oxoadipate pathway. This enzyme converts maleylacetate and 2-chloromaleylacetate with similar efficiencies. NADH is preferred to NADPH as the cosubstrate. This Cupriavidus pinatubonensis (strain JMP 134 / LMG 1197) (Cupriavidus necator (strain JMP 134)) protein is Maleylacetate reductase 2 (tfdFII).